The following is a 149-amino-acid chain: Transcriptional repressor NrdR (149 aa).

Residues 3 to 34 fold into a zinc finger; that stretch reads CPFCSATDTKVIDSRLVSDGHQVRRRRQCLAC. Residues 49 to 139 enclose the ATP-cone domain; it reads PKVIKSNGNR…VYRSFEDIKE (91 aa).

Belongs to the NrdR family. Zn(2+) serves as cofactor.

In terms of biological role, negatively regulates transcription of bacterial ribonucleotide reductase nrd genes and operons by binding to NrdR-boxes. The chain is Transcriptional repressor NrdR from Aliivibrio fischeri (strain ATCC 700601 / ES114) (Vibrio fischeri).